The following is a 212-amino-acid chain: Lipid A acyltransferase PagP (212 aa).

An N-terminal signal peptide occupies residues 1 to 26 (MSSTYFHSSLLAATLFSVTLTAPAFA). Over residues 29 to 44 (NTQNTPQTITTKKPQP) the composition is skewed to low complexity. The disordered stretch occupies residues 29 to 50 (NTQNTPQTITTKKPQPAENTFS). Catalysis depends on residues H84, D127, and S128.

Belongs to the lipid A palmitoyltransferase family. In terms of assembly, homodimer.

It is found in the cell outer membrane. The catalysed reaction is a lipid A + a 1,2-diacyl-sn-glycero-3-phosphocholine = a hepta-acyl lipid A + a 2-acyl-sn-glycero-3-phosphocholine. It catalyses the reaction a lipid IVA + a 1,2-diacyl-sn-glycero-3-phosphocholine = a lipid IVB + a 2-acyl-sn-glycero-3-phosphocholine. The enzyme catalyses a lipid IIA + a 1,2-diacyl-sn-glycero-3-phosphocholine = a lipid IIB + a 2-acyl-sn-glycero-3-phosphocholine. Functionally, transfers a fatty acid residue from the sn-1 position of a phospholipid to the N-linked hydroxyfatty acid chain on the proximal unit of lipid A or its precursors. The chain is Lipid A acyltransferase PagP from Proteus mirabilis (strain HI4320).